A 213-amino-acid chain; its full sequence is 3-hexulose-6-phosphate synthase 2 (213 aa).

It belongs to the HPS/KGPDC family. HPS subfamily.

The enzyme catalyses D-ribulose 5-phosphate + formaldehyde = D-arabino-hex-3-ulose 6-phosphate. It functions in the pathway one-carbon metabolism; formaldehyde assimilation via RuMP pathway; D-fructose 6-phosphate from D-ribulose 5-phosphate and formaldehyde: step 1/2. Catalyzes the condensation of ribulose 5-phosphate with formaldehyde to form 3-hexulose 6-phosphate. This Staphylococcus saprophyticus subsp. saprophyticus (strain ATCC 15305 / DSM 20229 / NCIMB 8711 / NCTC 7292 / S-41) protein is 3-hexulose-6-phosphate synthase 2.